The chain runs to 336 residues: Phosphoribosylformylglycinamidine cyclo-ligase (336 aa).

Belongs to the AIR synthase family.

The protein localises to the cytoplasm. The enzyme catalyses 2-formamido-N(1)-(5-O-phospho-beta-D-ribosyl)acetamidine + ATP = 5-amino-1-(5-phospho-beta-D-ribosyl)imidazole + ADP + phosphate + H(+). Its pathway is purine metabolism; IMP biosynthesis via de novo pathway; 5-amino-1-(5-phospho-D-ribosyl)imidazole from N(2)-formyl-N(1)-(5-phospho-D-ribosyl)glycinamide: step 2/2. The sequence is that of Phosphoribosylformylglycinamidine cyclo-ligase from Thermoanaerobacter sp. (strain X514).